Reading from the N-terminus, the 103-residue chain is Putative membrane protein insertion efficiency factor (103 aa).

This sequence belongs to the UPF0161 family.

It localises to the cell inner membrane. Its function is as follows. Could be involved in insertion of integral membrane proteins into the membrane. This Chlamydia pneumoniae (Chlamydophila pneumoniae) protein is Putative membrane protein insertion efficiency factor.